The sequence spans 82 residues: Proline, histidine and glycine-rich protein 1 (82 aa).

The disordered stretch occupies residues 20–82 (HCGPPPGHGP…PGHPPPGPHH (63 aa)).

This is Proline, histidine and glycine-rich protein 1 (PHGR1) from Homo sapiens (Human).